The chain runs to 448 residues: tRNA(Ile)-lysidine synthase (448 aa).

30 to 35 (GGGADS) provides a ligand contact to ATP.

This sequence belongs to the tRNA(Ile)-lysidine synthase family.

The protein resides in the cytoplasm. It catalyses the reaction cytidine(34) in tRNA(Ile2) + L-lysine + ATP = lysidine(34) in tRNA(Ile2) + AMP + diphosphate + H(+). Ligates lysine onto the cytidine present at position 34 of the AUA codon-specific tRNA(Ile) that contains the anticodon CAU, in an ATP-dependent manner. Cytidine is converted to lysidine, thus changing the amino acid specificity of the tRNA from methionine to isoleucine. This chain is tRNA(Ile)-lysidine synthase, found in Idiomarina loihiensis (strain ATCC BAA-735 / DSM 15497 / L2-TR).